The chain runs to 165 residues: MSHPALTQLRALRYFDQIPALSPEQLDWLLLEDSMTKRFEQQGKNVTVTLIQEGFVSSDEVSSELPLLPKEERYWLREILLCADGEPWLAGRTVVPESTLSGPELALQTLGKTPLGRYLFTSSELTRDFIEIGRDADLWGRRSRLRLSGKPLMLTELFLPASPLY.

Substrate-binding residues include methionine 35, arginine 77, leucine 115, and glutamate 156.

The protein belongs to the UbiC family. Monomer.

The protein resides in the cytoplasm. It catalyses the reaction chorismate = 4-hydroxybenzoate + pyruvate. It functions in the pathway cofactor biosynthesis; ubiquinone biosynthesis. Its function is as follows. Removes the pyruvyl group from chorismate, with concomitant aromatization of the ring, to provide 4-hydroxybenzoate (4HB) for the ubiquinone pathway. In Enterobacter sp. (strain 638), this protein is Chorismate pyruvate-lyase.